The sequence spans 300 residues: Tyrosine recombinase XerD (300 aa).

Residues 5-90 form the Core-binding (CB) domain; that stretch reads YQCDPLIDAF…SLRRFYNYLL (86 aa). Positions 111–294 constitute a Tyr recombinase domain; the sequence is HLPDSLSESQ…ARARLQELHQ (184 aa). Active-site residues include Arg-151, Lys-175, His-246, Arg-249, and His-272. The active-site O-(3'-phospho-DNA)-tyrosine intermediate is the Tyr-281.

It belongs to the 'phage' integrase family. XerD subfamily. In terms of assembly, forms a cyclic heterotetrameric complex composed of two molecules of XerC and two molecules of XerD.

The protein resides in the cytoplasm. Site-specific tyrosine recombinase, which acts by catalyzing the cutting and rejoining of the recombining DNA molecules. The XerC-XerD complex is essential to convert dimers of the bacterial chromosome into monomers to permit their segregation at cell division. It also contributes to the segregational stability of plasmids. This chain is Tyrosine recombinase XerD, found in Shewanella oneidensis (strain ATCC 700550 / JCM 31522 / CIP 106686 / LMG 19005 / NCIMB 14063 / MR-1).